We begin with the raw amino-acid sequence, 133 residues long: DNA-directed RNA polymerase subunit omega (133 aa).

It belongs to the RNA polymerase subunit omega family. The RNAP catalytic core consists of 2 alpha, 1 beta, 1 beta' and 1 omega subunit. When a sigma factor is associated with the core the holoenzyme is formed, which can initiate transcription.

It catalyses the reaction RNA(n) + a ribonucleoside 5'-triphosphate = RNA(n+1) + diphosphate. Its function is as follows. Promotes RNA polymerase assembly. Latches the N- and C-terminal regions of the beta' subunit thereby facilitating its interaction with the beta and alpha subunits. This Mesorhizobium japonicum (strain LMG 29417 / CECT 9101 / MAFF 303099) (Mesorhizobium loti (strain MAFF 303099)) protein is DNA-directed RNA polymerase subunit omega.